Reading from the N-terminus, the 320-residue chain is Methionyl-tRNA formyltransferase (320 aa).

Residue 111 to 114 coordinates (6S)-5,6,7,8-tetrahydrofolate; the sequence is SLLP.

Belongs to the Fmt family.

It carries out the reaction L-methionyl-tRNA(fMet) + (6R)-10-formyltetrahydrofolate = N-formyl-L-methionyl-tRNA(fMet) + (6S)-5,6,7,8-tetrahydrofolate + H(+). Attaches a formyl group to the free amino group of methionyl-tRNA(fMet). The formyl group appears to play a dual role in the initiator identity of N-formylmethionyl-tRNA by promoting its recognition by IF2 and preventing the misappropriation of this tRNA by the elongation apparatus. In Pediococcus pentosaceus (strain ATCC 25745 / CCUG 21536 / LMG 10740 / 183-1w), this protein is Methionyl-tRNA formyltransferase.